Reading from the N-terminus, the 151-residue chain is MASVEVESAATALPKNETPEVTKAEETKTEEPAAPPASEQETADATPEKEEPTAAPAEPEAPAPETEKAEEVEKIEKTEEPAPEADQTTPEEKPAEPEPVAEEEPKHETKETETEAPAAPAEGEKPAEEEKPITEAAETATTEVPVEKTEE.

A disordered region spans residues 1–151; the sequence is MASVEVESAA…TEVPVEKTEE (151 aa). Ala-2 is modified (N-acetylalanine). The span at 17 to 31 shows a compositional bias: basic and acidic residues; the sequence is ETPEVTKAEETKTEE. 2 stretches are compositionally biased toward low complexity: residues 36–45 and 53–64; these read PASEQETADA and TAAPAEPEAPAP. Basic and acidic residues-rich tracts occupy residues 65–80, 103–113, and 122–133; these read ETEKAEEVEKIEKTEE, EEPKHETKETE, and EGEKPAEEEKPI. Residues 134–144 show a composition bias toward low complexity; the sequence is TEAAETATTEV.

The protein to kiwi fruit protein PKIWI501. Post-translationally, the N-terminus is blocked.

In Hevea brasiliensis (Para rubber tree), this protein is Major latex allergen Hev b 5.